The sequence spans 548 residues: 4-methyl-5-nitrocatechol 5-monooxygenase (548 aa).

The protein belongs to the PheA/TfdB FAD monooxygenase family. Monomer. The cofactor is FAD.

The enzyme catalyses 4-methyl-5-nitrocatechol + NADPH + O2 = 2-hydroxy-5-methylquinone + nitrite + NADP(+) + H2O + H(+). It catalyses the reaction 4-methyl-5-nitrocatechol + NADH + O2 = 2-hydroxy-5-methylquinone + nitrite + NAD(+) + H2O + H(+). Its activity is regulated as follows. Activated by magnesium or manganese ions. Inhibited by concentrations of 4-methyl-5-nitrocatechol (MNC) above 2 mM. Involved in the degradation of 2,4-dinitrotoluene (2,4-DNT). Catalyzes the removal of the nitro group from 4-methyl-5-nitrocatechol (MNC) to yield 2-hydroxy-5-methylquinone. It can use both NADH and NADPH as electron donors, but prefers NADPH. Also able to use 4-nitrocatechol as substrate. In Burkholderia sp, this protein is 4-methyl-5-nitrocatechol 5-monooxygenase.